The sequence spans 514 residues: tRNA-2-methylthio-N(6)-dimethylallyladenosine synthase (514 aa).

The tract at residues 1–21 (MNEEQRKASSVDVLAERDKKA) is disordered. Residues 68-186 (RTFLIKTYGC…LPEILEEAYL (119 aa)) form the MTTase N-terminal domain. Residues Cys77, Cys113, Cys147, Cys223, Cys227, and Cys230 each coordinate [4Fe-4S] cluster. The 232-residue stretch at 209–440 (REGNIKAWVN…KKVGHYSQIA (232 aa)) folds into the Radical SAM core domain. The TRAM domain occupies 442–505 (SKYEGQTVTV…QYSLNGSFIK (64 aa)).

This sequence belongs to the methylthiotransferase family. MiaB subfamily. Monomer. The cofactor is [4Fe-4S] cluster.

The protein localises to the cytoplasm. It catalyses the reaction N(6)-dimethylallyladenosine(37) in tRNA + (sulfur carrier)-SH + AH2 + 2 S-adenosyl-L-methionine = 2-methylsulfanyl-N(6)-dimethylallyladenosine(37) in tRNA + (sulfur carrier)-H + 5'-deoxyadenosine + L-methionine + A + S-adenosyl-L-homocysteine + 2 H(+). In terms of biological role, catalyzes the methylthiolation of N6-(dimethylallyl)adenosine (i(6)A), leading to the formation of 2-methylthio-N6-(dimethylallyl)adenosine (ms(2)i(6)A) at position 37 in tRNAs that read codons beginning with uridine. The polypeptide is tRNA-2-methylthio-N(6)-dimethylallyladenosine synthase (Staphylococcus aureus (strain USA300 / TCH1516)).